A 90-amino-acid chain; its full sequence is Small ribosomal subunit protein uS15c (90 aa).

Belongs to the universal ribosomal protein uS15 family. In terms of assembly, part of the 30S ribosomal subunit.

It is found in the plastid. Its subcellular location is the chloroplast. The polypeptide is Small ribosomal subunit protein uS15c (rps15) (Nandina domestica (Heavenly bamboo)).